The primary structure comprises 754 residues: 5-methyltetrahydropteroyltriglutamate--homocysteine methyltransferase (754 aa).

5-methyltetrahydropteroyltri-L-glutamate is bound by residues 17 to 20 (RELK) and Lys-117. L-homocysteine is bound by residues 431 to 433 (IGS) and Glu-484. Residues 431–433 (IGS) and Glu-484 contribute to the L-methionine site. Residues 515–516 (RC) and Trp-561 contribute to the 5-methyltetrahydropteroyltri-L-glutamate site. L-homocysteine is bound at residue Asp-599. Asp-599 contacts L-methionine. Glu-605 contacts 5-methyltetrahydropteroyltri-L-glutamate. Residues His-641, Cys-643, and Glu-665 each contribute to the Zn(2+) site. Catalysis depends on His-694, which acts as the Proton donor. Cys-726 is a binding site for Zn(2+).

Belongs to the vitamin-B12 independent methionine synthase family. Zn(2+) serves as cofactor.

It carries out the reaction 5-methyltetrahydropteroyltri-L-glutamate + L-homocysteine = tetrahydropteroyltri-L-glutamate + L-methionine. It participates in amino-acid biosynthesis; L-methionine biosynthesis via de novo pathway; L-methionine from L-homocysteine (MetE route): step 1/1. Its function is as follows. Catalyzes the transfer of a methyl group from 5-methyltetrahydrofolate to homocysteine resulting in methionine formation. The polypeptide is 5-methyltetrahydropteroyltriglutamate--homocysteine methyltransferase (Klebsiella pneumoniae subsp. pneumoniae (strain ATCC 700721 / MGH 78578)).